The sequence spans 711 residues: C6 finger domain transcription factor nscR (711 aa).

The segment at residues 17–43 (CELCRERKVKCDKLDPCTNCSSAGVIC) is a DNA-binding region (zn(2)-C6 fungal-type). A disordered region spans residues 372-394 (SPPKHINDSDFDPTTSHDVPDRE).

The protein localises to the nucleus. Functionally, transcription factor that specifically regulates the neosartoricin B biosynthesis gene cluster. The protein is C6 finger domain transcription factor nscR of Trichophyton tonsurans (strain CBS 112818) (Scalp ringworm fungus).